Reading from the N-terminus, the 464-residue chain is Fumarate hydratase class II (464 aa).

Substrate-binding positions include Ser-97 to Thr-99, His-128 to Asp-131, Ser-138 to Asn-140, and Thr-186. Residue His-187 is the Proton donor/acceptor of the active site. Ser-317 is an active-site residue. Substrate-binding positions include Ser-318 and Lys-323–Asn-325.

It belongs to the class-II fumarase/aspartase family. Fumarase subfamily. Homotetramer.

The protein localises to the cytoplasm. It catalyses the reaction (S)-malate = fumarate + H2O. Its pathway is carbohydrate metabolism; tricarboxylic acid cycle; (S)-malate from fumarate: step 1/1. Functionally, involved in the TCA cycle. Catalyzes the stereospecific interconversion of fumarate to L-malate. This Leptospira interrogans serogroup Icterohaemorrhagiae serovar copenhageni (strain Fiocruz L1-130) protein is Fumarate hydratase class II.